The chain runs to 92 residues: Conotoxin Mr15.3 (92 aa).

Positions 1 to 20 (MSTLKMMLLILLLLLPMATF) are cleaved as a signal peptide. The propeptide occupies 21–53 (DSDGQAIPGGGIPSAVNSRVRGDEKSGRSLEKR).

Belongs to the conotoxin N superfamily. Contains 4 disulfide bonds. Expressed by the venom duct.

The protein localises to the secreted. This chain is Conotoxin Mr15.3, found in Conus marmoreus (Marble cone).